The primary structure comprises 228 residues: Ribosomal RNA small subunit methyltransferase G (228 aa).

S-adenosyl-L-methionine contacts are provided by residues Gly-92, Phe-97, 115 to 117, 143 to 144, and Arg-156; these read EAT and AE.

This sequence belongs to the methyltransferase superfamily. RNA methyltransferase RsmG family.

The protein resides in the cytoplasm. Specifically methylates the N7 position of a guanine in 16S rRNA. In Thermosynechococcus vestitus (strain NIES-2133 / IAM M-273 / BP-1), this protein is Ribosomal RNA small subunit methyltransferase G.